Reading from the N-terminus, the 466-residue chain is Soluble pyridine nucleotide transhydrogenase (466 aa).

36 to 45 (ERYHNVGGGC) is a binding site for FAD.

The protein belongs to the class-I pyridine nucleotide-disulfide oxidoreductase family. Requires FAD as cofactor.

It localises to the cytoplasm. The enzyme catalyses NAD(+) + NADPH = NADH + NADP(+). In terms of biological role, conversion of NADPH, generated by peripheral catabolic pathways, to NADH, which can enter the respiratory chain for energy generation. The sequence is that of Soluble pyridine nucleotide transhydrogenase from Citrobacter koseri (strain ATCC BAA-895 / CDC 4225-83 / SGSC4696).